A 354-amino-acid polypeptide reads, in one-letter code: UDP-3-O-acylglucosamine N-acyltransferase (354 aa).

Residue H247 is the Proton acceptor of the active site.

This sequence belongs to the transferase hexapeptide repeat family. LpxD subfamily. In terms of assembly, homotrimer.

It carries out the reaction a UDP-3-O-[(3R)-3-hydroxyacyl]-alpha-D-glucosamine + a (3R)-hydroxyacyl-[ACP] = a UDP-2-N,3-O-bis[(3R)-3-hydroxyacyl]-alpha-D-glucosamine + holo-[ACP] + H(+). It functions in the pathway bacterial outer membrane biogenesis; LPS lipid A biosynthesis. In terms of biological role, catalyzes the N-acylation of UDP-3-O-acylglucosamine using 3-hydroxyacyl-ACP as the acyl donor. Is involved in the biosynthesis of lipid A, a phosphorylated glycolipid that anchors the lipopolysaccharide to the outer membrane of the cell. The polypeptide is UDP-3-O-acylglucosamine N-acyltransferase (Chlamydia trachomatis serovar L2 (strain ATCC VR-902B / DSM 19102 / 434/Bu)).